Here is a 291-residue protein sequence, read N- to C-terminus: MATPREDHLKKGATASVYHTLVAGSVSGAVARAVTAPLDTVKIRLQLSNKSLGAHDGLRQTVVRIFKNEGIRAFWKGNVPAEIMYILYGATQFTSYSMFSKALTELETTYGFNLRPSNHSLIVGTSAGLTSLIVTYPFDLLRTRLAANSERHFLSMTAVIKQVRASGGLAGLYMGAKPTLLSLGLNSGLMFWTYEIAREVSAQYKDNIPFIEGFCGFFAGASSKGITFPLDTLRKRMQMRSSKTSIIGLARTILRREGLFGFYKGFGISLIKTAPTSAVSLFVYEVVLNGM.

Transmembrane regions (helical) follow at residues 12-31, 83-99, 120-141, 167-191, 214-230, and 265-282; these read GATA…GAVA, IMYI…YSMF, SLIV…FDLL, GGLA…GLMF, FCGF…TFPL, and GFGI…VSLF. Solcar repeat units follow at residues 15–102, 115–200, and 207–290; these read ASVY…FSKA, RPSN…AREV, and NIPF…VLNG.

Belongs to the mitochondrial carrier (TC 2.A.29) family.

It is found in the mitochondrion inner membrane. Its function is as follows. Mitochondrial transporter that mediates uptake of thiamine pyrophosphate (ThPP) into mitochondria. The protein is Mitochondrial thiamine pyrophosphate carrier 1 (TPC1) of Meyerozyma guilliermondii (strain ATCC 6260 / CBS 566 / DSM 6381 / JCM 1539 / NBRC 10279 / NRRL Y-324) (Yeast).